Reading from the N-terminus, the 275-residue chain is 2,3,4,5-tetrahydropyridine-2,6-dicarboxylate N-succinyltransferase (275 aa).

Arg-105 and Asp-142 together coordinate substrate.

The protein belongs to the transferase hexapeptide repeat family. As to quaternary structure, homotrimer.

The protein resides in the cytoplasm. The enzyme catalyses (S)-2,3,4,5-tetrahydrodipicolinate + succinyl-CoA + H2O = (S)-2-succinylamino-6-oxoheptanedioate + CoA. It participates in amino-acid biosynthesis; L-lysine biosynthesis via DAP pathway; LL-2,6-diaminopimelate from (S)-tetrahydrodipicolinate (succinylase route): step 1/3. This Histophilus somni (strain 129Pt) (Haemophilus somnus) protein is 2,3,4,5-tetrahydropyridine-2,6-dicarboxylate N-succinyltransferase.